The chain runs to 768 residues: Dual specificity calcium/calmodulin-dependent 3',5'-cyclic nucleotide phosphodiesterase 1C (768 aa).

Position 1 is an N-acetylmethionine (Met1). Residues 183–206 form a calmodulin-binding region; it reads EKPRFKSIVHAVQAGIFVERMYRR. Residues 211-588 enclose the PDEase domain; sequence VGLSYPPAVI…ERWRAKVPKE (378 aa). His288 (proton donor) is an active-site residue. The Zn(2+) site is built by His292, His328, Asp329, and Asp436. Position 329 (Asp329) interacts with Mg(2+). 2 disordered regions span residues 513–557 and 584–719; these read LIDE…INNS and KVPK…PPLR. 2 stretches are compositionally biased toward polar residues: residues 516 to 536 and 543 to 557; these read ETSQ…INSS and VKSS…INNS. Positions 584–614 are enriched in basic and acidic residues; sequence KVPKEEKAKKEAEEKARLAAEEKQKEMEAKS. Residues 631–641 are compositionally biased toward polar residues; it reads ETKGQVNGTRT. Composition is skewed to basic and acidic residues over residues 642-659 and 665-692; these read SKGD…KAGE and DLKD…DGTK. Positions 698–712 are enriched in low complexity; sequence SPAPSTSSTSRLTLP.

This sequence belongs to the cyclic nucleotide phosphodiesterase family. PDE1 subfamily. In terms of assembly, homodimer. It depends on Zn(2+) as a cofactor. Requires Mg(2+) as cofactor. As to expression, highly expressed in olfactory epithelium and at moderate levels, in cerebellum, as well as weakly in forebrain, testis, heart and lung. In the olfactory epithelium, expressed by sensory neurons, but not epithelial cells.

It localises to the lysosome. It carries out the reaction a nucleoside 3',5'-cyclic phosphate + H2O = a nucleoside 5'-phosphate + H(+). The catalysed reaction is 3',5'-cyclic GMP + H2O = GMP + H(+). It catalyses the reaction 3',5'-cyclic AMP + H2O = AMP + H(+). Its activity is regulated as follows. Type I PDE are activated by the binding of calmodulin in the presence of Ca(2+). In terms of biological role, calmodulin-dependent cyclic nucleotide phosphodiesterase with a dual specificity for the second messengers cAMP and cGMP, which are key regulators of many important physiological processes. Has a high affinity for both cAMP and cGMP. Modulates the amplitude and duration of the cAMP signal in sensory cilia in response to odorant stimulation, hence contributing to the generation of action potentials. Regulates smooth muscle cell proliferation. Regulates the stability of growth factor receptors, including PDGFRB. This Rattus norvegicus (Rat) protein is Dual specificity calcium/calmodulin-dependent 3',5'-cyclic nucleotide phosphodiesterase 1C.